The primary structure comprises 122 residues: uncharacterized protein (122 aa).

Threonine 55 is subject to Phosphothreonine. Serine 72, serine 86, serine 96, serine 112, and serine 118 each carry phosphoserine.

The protein localises to the cytoplasm. This is an uncharacterized protein from Homo sapiens (Human).